A 181-amino-acid polypeptide reads, in one-letter code: Extracellular superoxide dismutase [Cu-Zn] (181 aa).

Positions 1 to 18 (MMQYLVVSLALCATICSA) are cleaved as a signal peptide. Asn46 carries N-linked (GlcNAc...) asparagine glycosylation. 3 residues coordinate Cu cation: His75, His77, and His92. Cys86 and Cys175 are joined by a disulfide. Zn(2+)-binding residues include His92, His100, His109, and Asp112. An N-linked (GlcNAc...) asparagine glycan is attached at Asn119. His149 contributes to the Cu cation binding site. The N-linked (GlcNAc...) asparagine glycan is linked to Asn159.

It belongs to the Cu-Zn superoxide dismutase family. Cu cation serves as cofactor. It depends on Zn(2+) as a cofactor. Expressed at higher levels in females compared to males.

It localises to the secreted. It carries out the reaction 2 superoxide + 2 H(+) = H2O2 + O2. In terms of biological role, protects the extracellular space from the toxic effects of reactive oxygen intermediates by converting superoxide radicals into hydrogen peroxide and oxygen. The protein is Extracellular superoxide dismutase [Cu-Zn] of Drosophila melanogaster (Fruit fly).